Consider the following 372-residue polypeptide: Cytochrome b (372 aa).

A run of 4 helical transmembrane segments spans residues 25–45, 69–90, 105–125, and 170–190; these read FGSM…FLAI, WIMQ…YIHI, WLSG…GYVL, and FFAL…IHIM. Heme b contacts are provided by His-75 and His-89. Heme b contacts are provided by His-174 and His-188. Residue His-193 participates in a ubiquinone binding. The next 4 membrane-spanning stretches (helical) occupy residues 218–238, 280–300, 312–332, and 339–358; these read HKDI…MTLT, LGGT…PFTH, LTQL…WAAT, and FTMI…IMNP.

The protein belongs to the cytochrome b family. As to quaternary structure, the cytochrome bc1 complex contains 3 respiratory subunits (MT-CYB, CYC1 and UQCRFS1), 2 core proteins (UQCRC1 and UQCRC2) and probably 6 low-molecular weight proteins. The cofactor is heme b.

The protein localises to the mitochondrion inner membrane. Functionally, component of the ubiquinol-cytochrome c reductase complex (complex III or cytochrome b-c1 complex) that is part of the mitochondrial respiratory chain. The b-c1 complex mediates electron transfer from ubiquinol to cytochrome c. Contributes to the generation of a proton gradient across the mitochondrial membrane that is then used for ATP synthesis. This is Cytochrome b (MT-CYB) from Lycodon semicarinatus (Ryukyu odd-tooth snake).